The chain runs to 474 residues: UDP-N-acetylmuramoylalanine--D-glutamate ligase (474 aa).

Residue 134 to 140 coordinates ATP; sequence GSNGKST.

Belongs to the MurCDEF family.

The protein localises to the cytoplasm. The catalysed reaction is UDP-N-acetyl-alpha-D-muramoyl-L-alanine + D-glutamate + ATP = UDP-N-acetyl-alpha-D-muramoyl-L-alanyl-D-glutamate + ADP + phosphate + H(+). It participates in cell wall biogenesis; peptidoglycan biosynthesis. Its function is as follows. Cell wall formation. Catalyzes the addition of glutamate to the nucleotide precursor UDP-N-acetylmuramoyl-L-alanine (UMA). This Thiobacillus denitrificans (strain ATCC 25259 / T1) protein is UDP-N-acetylmuramoylalanine--D-glutamate ligase.